Here is a 498-residue protein sequence, read N- to C-terminus: Probable cytosol aminopeptidase (498 aa).

2 residues coordinate Mn(2+): K264 and D269. K276 is a catalytic residue. Residues D287, D346, and E348 each coordinate Mn(2+). R350 is a catalytic residue.

It belongs to the peptidase M17 family. The cofactor is Mn(2+).

The protein localises to the cytoplasm. The enzyme catalyses Release of an N-terminal amino acid, Xaa-|-Yaa-, in which Xaa is preferably Leu, but may be other amino acids including Pro although not Arg or Lys, and Yaa may be Pro. Amino acid amides and methyl esters are also readily hydrolyzed, but rates on arylamides are exceedingly low.. It catalyses the reaction Release of an N-terminal amino acid, preferentially leucine, but not glutamic or aspartic acids.. Functionally, presumably involved in the processing and regular turnover of intracellular proteins. Catalyzes the removal of unsubstituted N-terminal amino acids from various peptides. The polypeptide is Probable cytosol aminopeptidase (Brucella anthropi (strain ATCC 49188 / DSM 6882 / CCUG 24695 / JCM 21032 / LMG 3331 / NBRC 15819 / NCTC 12168 / Alc 37) (Ochrobactrum anthropi)).